The primary structure comprises 299 residues: MVRCLGPALLLLLLLGSASSVGGNRCVDAAEACTADARCQRLRSEYVAQCLGRAAQGGCPRARCRRALRRFFARGPPALTHALLFCPCAGPACAERRRQTFVPSCAFSGPGPAPPSCLEPLNFCERSRVCRCARAAAGPWRGWGRGLSPAHRPPAAQASPPGLSGLVHPSAQRPRRLPAGPGRPLPARLRGPRGVPAGTAVTPNYVDNVSARVAPWCDCGASGNRREDCEAFRGLFTRNRCLDGAIQAFASGWPPVLLDQLNPQGDPEHSLLQVSSTGRALERRSLLSILPVLALPALL.

An N-terminal signal peptide occupies residues 1 to 20 (MVRCLGPALLLLLLLGSASS). Positions 145 to 198 (RGLSPAHRPPAAQASPPGLSGLVHPSAQRPRRLPAGPGRPLPARLRGPRGVPAG) are disordered. Low complexity predominate over residues 177–198 (LPAGPGRPLPARLRGPRGVPAG). Asparagine 208 carries an N-linked (GlcNAc...) asparagine glycan. Glycine 278 carries GPI-anchor amidated glycine lipidation. Positions 279–299 (RALERRSLLSILPVLALPALL) are cleaved as a propeptide — removed in mature form.

The protein belongs to the GDNFR family. In terms of assembly, interacts with ARTN ligand and RET: forms a 2:2:2 ternary complex composed of ARTN ligand, GFRA3 and RET receptor. Interacts with SORL1. Predominantly expressed in the adult thyroid gland. Low levels also found in fetal adrenal and thyroid glands.

The protein resides in the cell membrane. It localises to the secreted. Its function is as follows. Receptor for persephin (PSPN), a growth factor that exhibits neurotrophic activity on mesencephalic dopaminergic and motor neurons. Acts by binding to its coreceptor, GFRA4, leading to autophosphorylation and activation of the RET receptor. May be important in C-cell development and, in the postnatal development of the adrenal medulla. The polypeptide is GDNF family receptor alpha-4 (GFRA4) (Homo sapiens (Human)).